A 273-amino-acid chain; its full sequence is Undecaprenyl-diphosphatase (273 aa).

7 helical membrane passes run 6–26 (SLLI…LPVS), 45–65 (AKTF…VMFW), 90–110 (LTLI…LLFH), 116–136 (LFNP…LIAA), 190–210 (YAAS…ATAL), 222–242 (GDIP…LIAI), and 252–272 (ISFI…YVVF).

This sequence belongs to the UppP family.

The protein localises to the cell inner membrane. It carries out the reaction di-trans,octa-cis-undecaprenyl diphosphate + H2O = di-trans,octa-cis-undecaprenyl phosphate + phosphate + H(+). In terms of biological role, catalyzes the dephosphorylation of undecaprenyl diphosphate (UPP). Confers resistance to bacitracin. This Escherichia coli O127:H6 (strain E2348/69 / EPEC) protein is Undecaprenyl-diphosphatase.